A 519-amino-acid chain; its full sequence is T-box transcription factor TBX5 (519 aa).

The tract at residues 1 to 43 (MADTEEAYGMPDTPVEAEPKELQCEPKQDNQMGASSKTPTSPQ) is disordered. Positions 17–28 (AEPKELQCEPKQ) are enriched in basic and acidic residues. Residues 29-43 (DNQMGASSKTPTSPQ) show a composition bias toward polar residues. Residues 63–238 (LWLKFHEVGT…NNPFAKGFRG (176 aa)) constitute a DNA-binding region (T-box). 2 disordered regions span residues 254-312 (EYPV…SAYP) and 335-376 (ELSY…TESA). Residues 262–303 (TVRQKVSSNHSPFSQETRNITGSSTLNSQYQCENGVSSTSQD) show a composition bias toward polar residues.

As to quaternary structure, monomer. Homodimer (via the T-box); binds DNA as homodimer.

It is found in the nucleus. It localises to the cytoplasm. Functionally, DNA-binding protein that regulates the transcription of several genes and is involved in heart development and limb pattern formation. May bind to the core DNA motif of promoters. In Xenopus tropicalis (Western clawed frog), this protein is T-box transcription factor TBX5 (tbx5).